Reading from the N-terminus, the 265-residue chain is UPF0354 protein GTNG_2723 (265 aa).

It belongs to the UPF0354 family.

The protein is UPF0354 protein GTNG_2723 of Geobacillus thermodenitrificans (strain NG80-2).